The primary structure comprises 397 residues: Serpin B10 (397 aa).

Residues 74–77 (KKRK) carry the Nuclear localization signal motif.

It belongs to the serpin family. Ov-serpin subfamily.

The protein resides in the nucleus. Its subcellular location is the cytoplasm. Functionally, protease inhibitor that may play a role in the regulation of protease activities during hematopoiesis and apoptosis induced by TNF. May regulate protease activities in the cytoplasm and in the nucleus. This chain is Serpin B10 (Serpinb10), found in Mus musculus (Mouse).